Here is a 322-residue protein sequence, read N- to C-terminus: ATP-dependent 6-phosphofructokinase (322 aa).

Gly-11 contributes to the ATP binding site. Residue Arg-21 to Arg-25 coordinates ADP. Residues Arg-72–Tyr-73 and Gly-102–Ser-105 each bind ATP. Residue Asp-103 participates in Mg(2+) binding. Thr-125 to Asp-127 provides a ligand contact to substrate. Asp-127 functions as the Proton acceptor in the catalytic mechanism. Residue Arg-154 coordinates ADP. Substrate contacts are provided by residues Arg-162 and Met-169 to Arg-171. Residues Gly-185–Asp-187 and Lys-213–Tyr-215 each bind ADP. Substrate-binding positions include Glu-222, Arg-246, and His-252–Arg-255.

This sequence belongs to the phosphofructokinase type A (PFKA) family. ATP-dependent PFK group I subfamily. Prokaryotic clade 'B1' sub-subfamily. In terms of assembly, homotetramer. It depends on Mg(2+) as a cofactor.

The protein resides in the cytoplasm. It catalyses the reaction beta-D-fructose 6-phosphate + ATP = beta-D-fructose 1,6-bisphosphate + ADP + H(+). It functions in the pathway carbohydrate degradation; glycolysis; D-glyceraldehyde 3-phosphate and glycerone phosphate from D-glucose: step 3/4. Its activity is regulated as follows. Allosterically activated by ADP and other diphosphonucleosides, and allosterically inhibited by phosphoenolpyruvate. Its function is as follows. Catalyzes the phosphorylation of D-fructose 6-phosphate to fructose 1,6-bisphosphate by ATP, the first committing step of glycolysis. This chain is ATP-dependent 6-phosphofructokinase, found in Pediococcus pentosaceus (strain ATCC 25745 / CCUG 21536 / LMG 10740 / 183-1w).